The sequence spans 751 residues: Semaphorin-3C (751 aa).

Residues 1–21 form the signal peptide; it reads MAVLALHAVFGIFIYFSSVKG. Positions 28-511 constitute a Sema domain; the sequence is RVFLTFNELQ…SEEGVTQVPL (484 aa). N81 is a glycosylation site (N-linked (GlcNAc...) asparagine). A disulfide bridge links C101 with C112. The N-linked (GlcNAc...) asparagine glycan is linked to N123. Intrachain disulfides connect C130–C139, C266–C378, and C290–C338. An N-linked (GlcNAc...) asparagine glycan is attached at N268. The N-linked (GlcNAc...) asparagine glycan is linked to N465. C514 and C532 are disulfide-bonded. Residues 571–655 form the Ig-like C2-type domain; sequence AYRNAAETVQ…TENNFKQTLA (85 aa). N-linked (GlcNAc...) asparagine glycans are attached at residues N585 and N586. A disulfide bond links C643 and C709. Residues 712–731 are compositionally biased toward basic and acidic residues; the sequence is SRQQGQRREEPQKMRGDYSK. The disordered stretch occupies residues 712-751; the sequence is SRQQGQRREEPQKMRGDYSKLKALINSRKSRNRRNQLPAS.

The protein belongs to the semaphorin family. As to expression, collapsin-1, -2, -3, and -5 bind to overlapping but distinct axon tracts.

The protein resides in the secreted. Functionally, induces the collapse and paralysis of neuronal growth cones. Could potentially act as repulsive cues toward specific neuronal populations. Binds to neuropilin. This Gallus gallus (Chicken) protein is Semaphorin-3C (SEMA3C).